Reading from the N-terminus, the 434-residue chain is Fez family zinc finger protein 2 (434 aa).

Positions 27 to 42 match the Engrailed homology 1 repressor motif; it reads SLAFSIERIMAKTSEP. 6 consecutive C2H2-type zinc fingers follow at residues 253-275, 281-303, 309-331, 337-359, 365-387, and 393-416; these read FTCE…MPVH, FVCK…KIIH, HKCN…IRIH, FVCE…KLTH, YKCS…MHTH, and FTCA…RKLH.

This sequence belongs to the krueppel C2H2-type zinc-finger protein family.

It is found in the nucleus. Functionally, transcription repressor. Component of the regulatory cascade that controls the development of dopaminergic (DA) and serotonergic (5HT) neurons. The sequence is that of Fez family zinc finger protein 2 (fezf2) from Xenopus laevis (African clawed frog).